Here is a 150-residue protein sequence, read N- to C-terminus: Lymphotoxin-beta (150 aa).

One can recognise a THD domain in the interval 1–149 (AWITGQGLGW…GKTFFGAVMV (149 aa)). N-linked (GlcNAc...) asparagine glycosylation occurs at Asn-128.

The protein belongs to the tumor necrosis factor family. Heterotrimer of either two LTB and one LTA subunits or (less prevalent) two LTA and one LTB subunits.

Its subcellular location is the membrane. Functionally, cytokine that binds to LTBR/TNFRSF3. May play a specific role in immune response regulation. Provides the membrane anchor for the attachment of the heterotrimeric complex to the cell surface. The chain is Lymphotoxin-beta (LTB) from Sus scrofa (Pig).